Consider the following 97-residue polypeptide: Co-chaperonin GroES (97 aa).

Belongs to the GroES chaperonin family. Heptamer of 7 subunits arranged in a ring. Interacts with the chaperonin GroEL.

It is found in the cytoplasm. Functionally, together with the chaperonin GroEL, plays an essential role in assisting protein folding. The GroEL-GroES system forms a nano-cage that allows encapsulation of the non-native substrate proteins and provides a physical environment optimized to promote and accelerate protein folding. GroES binds to the apical surface of the GroEL ring, thereby capping the opening of the GroEL channel. This chain is Co-chaperonin GroES, found in Pectobacterium carotovorum subsp. carotovorum (strain PC1).